The primary structure comprises 308 residues: Olfactory receptor OR9H1 (308 aa).

Over 1–26 (MVNFTHVSEFVLLGFQGGPGMQAMLF) the chain is Extracellular. The helical transmembrane segment at 27–47 (LIFLILYGIAVVGNLGMIVII) threads the bilayer. The Cytoplasmic portion of the chain corresponds to 48–58 (WVDAHLHTPMY). The helical transmembrane segment at 59–81 (AFLQSLSLLDICYSSTIAPRALA) threads the bilayer. At 82–95 (NSMQEDHTISFGGC) the chain is on the extracellular side. A disulfide bond links Cys95 and Cys177. A helical transmembrane segment spans residues 96–116 (AAQFFFLSLFGITEAFLLAAM). Over 117–137 (AYDRFIAICNPLLYSVSMSHQ) the chain is Cytoplasmic. A helical membrane pass occupies residues 138-158 (VCVLLISGSYLWGVVNAIAQT). Residues 159-203 (TMTFRLPFCGSNEINDFFCDVPPLLSLSCSDTFINQLVLLGLCGS) are Extracellular-facing. The helical transmembrane segment at 204-224 (IIVSTFLIVLVSYIYIISTIL) threads the bilayer. The Cytoplasmic portion of the chain corresponds to 225–245 (RIPTMQGCQKAFSTCASHLTG). A helical transmembrane segment spans residues 246-266 (VCLFFGTVFFMYAQPSAIFFM). Residues 267–269 (EQS) lie on the Extracellular side of the membrane. A helical membrane pass occupies residues 270–290 (KIVSIFYTMVIPMLNPLIYSL). Over 291–308 (RNKEVKQALRRSMQKLSL) the chain is Cytoplasmic.

This sequence belongs to the G-protein coupled receptor 1 family.

Its subcellular location is the cell membrane. In terms of biological role, odorant receptor. This Homo sapiens (Human) protein is Olfactory receptor OR9H1.